Consider the following 117-residue polypeptide: MARVKRGVQVRQRHKKVIKQAKGFHGRSKNCYRIALRRLEKSWQYAYRDRKVRKRDFRSLWIQRINAAVRSFGLVYSVFMKGLKAAGVDVNRKVLSELAISQPSAFGEIVNKAKAAL.

It belongs to the bacterial ribosomal protein bL20 family.

Functionally, binds directly to 23S ribosomal RNA and is necessary for the in vitro assembly process of the 50S ribosomal subunit. It is not involved in the protein synthesizing functions of that subunit. This Neorickettsia sennetsu (strain ATCC VR-367 / Miyayama) (Ehrlichia sennetsu) protein is Large ribosomal subunit protein bL20.